Here is a 273-residue protein sequence, read N- to C-terminus: Putative phosphoenolpyruvate synthase regulatory protein (273 aa).

153–160 (AVSRAGKT) lines the ADP pocket.

Belongs to the pyruvate, phosphate/water dikinase regulatory protein family. PSRP subfamily.

It catalyses the reaction [pyruvate, water dikinase] + ADP = [pyruvate, water dikinase]-phosphate + AMP + H(+). It carries out the reaction [pyruvate, water dikinase]-phosphate + phosphate + H(+) = [pyruvate, water dikinase] + diphosphate. In terms of biological role, bifunctional serine/threonine kinase and phosphorylase involved in the regulation of the phosphoenolpyruvate synthase (PEPS) by catalyzing its phosphorylation/dephosphorylation. In Xanthomonas axonopodis pv. citri (strain 306), this protein is Putative phosphoenolpyruvate synthase regulatory protein.